Here is a 343-residue protein sequence, read N- to C-terminus: Glycogen biosynthesis protein GlgD (343 aa).

This sequence belongs to the bacterial/plant glucose-1-phosphate adenylyltransferase family.

Required for the synthesis of glycogen. The sequence is that of Glycogen biosynthesis protein GlgD (glgD) from Geobacillus stearothermophilus (Bacillus stearothermophilus).